Reading from the N-terminus, the 216-residue chain is MKINTVLFDLDGTLINTNELIISSFLHTLHTYYPNQYKREDVLPFIGPSLHDTFSKIDESKVEELITSYRQFNHDHHDELVEEYETVYETVQELKKQGYKVGIVTTKARQTVEMGLKFSKLDEFFDVVVTIDDVEHVKPHPEPLQKALQLLDAKPEEALMVGDNHHDIVGGQNAGTKTAAVSWTLKGRAYLEAYKPDFMLDKMSDLLPILSDMNRS.

The active-site Nucleophile is D9.

It belongs to the HAD-like hydrolase superfamily. PpaX family. The cofactor is Mg(2+).

It carries out the reaction diphosphate + H2O = 2 phosphate + H(+). Its function is as follows. Hydrolyzes pyrophosphate formed during P-Ser-HPr dephosphorylation by HPrK/P. Might play a role in controlling the intracellular pyrophosphate pool. This is Pyrophosphatase PpaX from Bacillus cereus (strain ATCC 10987 / NRS 248).